Here is a 235-residue protein sequence, read N- to C-terminus: uncharacterized protein (235 aa).

This is an uncharacterized protein from Shigella flexneri.